The following is a 413-amino-acid chain: Gamma-lactamase FDB1 (413 aa).

The Zn(2+) site is built by His126, His128, Asp130, His131, His211, Asp235, and His323.

Belongs to the metallo-beta-lactamase superfamily.

Its pathway is xenobiotic degradation. Its function is as follows. Gamma-lactamase; part of the Fusarium detoxification of benzoxazolinone cluster involved in the degradation of benzoxazolinones produced by the host plant. Maize, wheat, and rye produce the 2 benzoxazinone phytoanticipins 2,4-dihy-droxy-7-methoxy-1,4-benzoxazin-3-one (DIMBOA) and 2,4-dihydroxy-1,4-benzoxazin-3-one (DIBOA) that, due to their inherent instability once released, spontaneously degrade to the more stable corresponding benzoxazolinones, 6-methoxy-2-benzoxazolinone (MBOA) and 2-benzoxazolinone (BOA), respectively. The first step in the detoxification of benzoxazolinones involves the hydrolysis of the cyclic ester bond of benzoxazolinones by the gamma-lactamase FDB1 to aminophenols. FDB1 is able to convert BOA into 2-aminophenol (2-AP), as well as MBOA into 5-methoxy-2-aminophenol (2-AMP). The N-malonyltransferase FDB2 then metabolizes aminophenols via N-malonylation to non-toxic malonamic acids. FDB2 converts 2-AP into N-(2-hydroxyphenyl) malonamic acid (HPMA) and 2-AMP into N-(2-hydroxy-4-methoxyphenyl) malonamic acid (HMPMA). The cluster also contains 2 transcription factors (FDB3 and FPSE_08121), an aldo-keto reductase (FPSE_08125) that possibly associates with a ketone component of BOA and MBOA degradation, an esterase (FPSE_08126), an acyl-CoA transferase (FPSE_08120), a solute carrier protein (FPSE_08119) and a transmembrane transporter (FPSE_08127) proposed to shuttle metabolites of benzoxazolinone degradation. The chain is Gamma-lactamase FDB1 from Fusarium pseudograminearum (strain CS3096) (Wheat and barley crown-rot fungus).